We begin with the raw amino-acid sequence, 366 residues long: Terpene cyclase atmA (366 aa).

8 consecutive transmembrane segments (helical) span residues phenylalanine 9 to phenylalanine 29, leucine 84 to isoleucine 104, glycine 113 to isoleucine 133, glycine 162 to alanine 182, isoleucine 195 to phenylalanine 215, valine 233 to valine 253, alanine 291 to tryptophan 311, and isoleucine 333 to isoleucine 353.

The protein belongs to the membrane-bound ascI terpene cyclase family.

Its subcellular location is the membrane. Its function is as follows. Aflatrem synthesis protein A; part of the ATM2 gene cluster that mediates the biosynthesis of aflatrem, a tremorgenic mycotoxin with acute neurotoxic effects. Synthesis of geranylgeranyl diphosphate (GGPP) by AtmG (a GGPP synthase) precedes condensation of GGPP with indole 3-glycerol phosphate, followed by epoxidation and cyclization by AtmM (a FAD-dependent monooxygenase) and AtmC (a prenyltransferase) to produce paspaline. AtmB is also essential for paspaline production, but its exact role has not been identified yet. AtmP, a cytochrome P450 monooxygenase, subsequently converts paspaline to 13-desoxypaxilline via PC-M6 by removal of the C-30 methyl group and oxidation at C-10. AtmQ, a cytochrome P450 monooxygenase, then catalyzes the oxidation of 13-desoxypaxilline, first at C-7 to produce paspalicine and then at C-13 to form paspalinine. Finally, AtmD prenylates paspalinine to form aflatrem. The role of atmA in the aflatrem biosynthesis is still unknown. This is Terpene cyclase atmA from Aspergillus flavus.